We begin with the raw amino-acid sequence, 314 residues long: MGPLINRCKKILLPTTVPPATMRIWLLGGLLPFLLLLSGLQRPTEGSEVAIKIDFDFAPGSFDDQYQGCSKQVMEKLTQGDYFTKDIEAQKNYFRMWQKAHLAWLNQGKVLPQNMTTTHAVAILFYTLNSNVHSDFTRAMASVARTPQQYERSFHFKYLHYYLTSAIQLLRKDSIMENGTLCYEVHYRTKDVHFNAYTGATIRFGQFLSTSLLKEEAQEFGNQTLFTIFTCLGAPVQYFSLKKEVLIPPYELFKVINMSYHPRGDWLQLRSTGNLSTYNCQLLKASSKKCIPDPIAIASLSFLTSVIIFSKSRV.

The N-terminal stretch at 1–46 (MGPLINRCKKILLPTTVPPATMRIWLLGGLLPFLLLLSGLQRPTEG) is a signal peptide. Intrachain disulfides connect C69–C280 and C182–C231. Residues 91–276 (KNYFRMWQKA…LQLRSTGNLS (186 aa)) form the TR mART core domain. N114 carries N-linked (GlcNAc...) asparagine glycosylation. Position 126 (Y126) interacts with NAD(+). N-linked (GlcNAc...) asparagine glycosylation is present at N178. Q206 lines the NAD(+) pocket. The N-linked (GlcNAc...) asparagine glycan is linked to N222. S240 serves as a coordination point for NAD(+). N257 and N274 each carry an N-linked (GlcNAc...) asparagine glycan. The GPI-anchor amidated alanine moiety is linked to residue A285. The propeptide at 286–314 (SSKKCIPDPIAIASLSFLTSVIIFSKSRV) is removed in mature form.

This sequence belongs to the Arg-specific ADP-ribosyltransferase family. Expressed in spleen and T-cells.

It is found in the cell membrane. The catalysed reaction is L-arginyl-[protein] + NAD(+) = N(omega)-(ADP-D-ribosyl)-L-arginyl-[protein] + nicotinamide + H(+). The protein is Ecto-ADP-ribosyltransferase 4 (ART4) of Homo sapiens (Human).